The primary structure comprises 57 residues: UPF0391 membrane protein RPB_2510 (57 aa).

The next 2 membrane-spanning stretches (helical) occupy residues 6-26 (WALI…TGIS) and 35-55 (ILFY…FTIF).

It belongs to the UPF0391 family.

The protein resides in the cell membrane. This is UPF0391 membrane protein RPB_2510 from Rhodopseudomonas palustris (strain HaA2).